Here is a 215-residue protein sequence, read N- to C-terminus: Cytochrome b6 (215 aa).

A helical membrane pass occupies residues 32–52; it reads IFYCLGGITLTCFIVQVATGF. Position 35 (Cys-35) interacts with heme c. 2 residues coordinate heme b: His-86 and His-100. 3 helical membrane passes run 90–110, 116–136, and 186–206; these read ASMM…TGGF, LTWV…VTGY, and AHTF…FVMI. Positions 187 and 202 each coordinate heme b.

Belongs to the cytochrome b family. PetB subfamily. In terms of assembly, the 4 large subunits of the cytochrome b6-f complex are cytochrome b6, subunit IV (17 kDa polypeptide, PetD), cytochrome f and the Rieske protein, while the 4 small subunits are PetG, PetL, PetM and PetN. The complex functions as a dimer. The cofactor is heme b. Heme c is required as a cofactor.

The protein resides in the plastid. It is found in the chloroplast thylakoid membrane. Component of the cytochrome b6-f complex, which mediates electron transfer between photosystem II (PSII) and photosystem I (PSI), cyclic electron flow around PSI, and state transitions. The sequence is that of Cytochrome b6 from Emiliania huxleyi (Coccolithophore).